Reading from the N-terminus, the 192-residue chain is Ribosome maturation factor RimP (192 aa).

It belongs to the RimP family.

The protein localises to the cytoplasm. Functionally, required for maturation of 30S ribosomal subunits. In Mycobacterium sp. (strain JLS), this protein is Ribosome maturation factor RimP.